Reading from the N-terminus, the 118-residue chain is Protein TusC (118 aa).

Belongs to the DsrF/TusC family. As to quaternary structure, heterohexamer, formed by a dimer of trimers. The hexameric TusBCD complex contains 2 copies each of TusB, TusC and TusD. The TusBCD complex interacts with TusE.

Its subcellular location is the cytoplasm. Its function is as follows. Part of a sulfur-relay system required for 2-thiolation of 5-methylaminomethyl-2-thiouridine (mnm(5)s(2)U) at tRNA wobble positions. This chain is Protein TusC, found in Salmonella paratyphi C (strain RKS4594).